We begin with the raw amino-acid sequence, 542 residues long: Chaperonin GroEL (542 aa).

Residues T29–P32, K50, D86–T90, G415, and D495 contribute to the ATP site.

Belongs to the chaperonin (HSP60) family. Forms a cylinder of 14 subunits composed of two heptameric rings stacked back-to-back. Interacts with the co-chaperonin GroES.

It localises to the cytoplasm. It catalyses the reaction ATP + H2O + a folded polypeptide = ADP + phosphate + an unfolded polypeptide.. Together with its co-chaperonin GroES, plays an essential role in assisting protein folding. The GroEL-GroES system forms a nano-cage that allows encapsulation of the non-native substrate proteins and provides a physical environment optimized to promote and accelerate protein folding. This chain is Chaperonin GroEL, found in Azobacteroides pseudotrichonymphae genomovar. CFP2.